The following is a 72-amino-acid chain: Translation initiation factor IF-1 (72 aa).

Residues 2–72 enclose the S1-like domain; it reads AKEDCIEMQG…SKGRIIFRSR (71 aa).

The protein belongs to the IF-1 family. As to quaternary structure, component of the 30S ribosomal translation pre-initiation complex which assembles on the 30S ribosome in the order IF-2 and IF-3, IF-1 and N-formylmethionyl-tRNA(fMet); mRNA recruitment can occur at any time during PIC assembly.

It localises to the cytoplasm. In terms of biological role, one of the essential components for the initiation of protein synthesis. Stabilizes the binding of IF-2 and IF-3 on the 30S subunit to which N-formylmethionyl-tRNA(fMet) subsequently binds. Helps modulate mRNA selection, yielding the 30S pre-initiation complex (PIC). Upon addition of the 50S ribosomal subunit IF-1, IF-2 and IF-3 are released leaving the mature 70S translation initiation complex. This chain is Translation initiation factor IF-1, found in Haemophilus influenzae (strain ATCC 51907 / DSM 11121 / KW20 / Rd).